Here is a 61-residue protein sequence, read N- to C-terminus: Probable tautomerase SERP0934 (61 aa).

Pro2 serves as the catalytic Proton acceptor; via imino nitrogen.

Belongs to the 4-oxalocrotonate tautomerase family.

This chain is Probable tautomerase SERP0934, found in Staphylococcus epidermidis (strain ATCC 35984 / DSM 28319 / BCRC 17069 / CCUG 31568 / BM 3577 / RP62A).